A 432-amino-acid chain; its full sequence is Succinate--CoA ligase [GDP-forming] subunit beta, mitochondrial (432 aa).

A mitochondrion-targeting transit peptide spans 1 to 37 (MASPVAAQAGKLLRALALRPRFLAAGSQAVQLTSRRW). The region spanning 46–274 (KKLMSDNGVR…NAEFRQKDIF (229 aa)) is the ATP-grasp domain. Gln-57 provides a ligand contact to GTP. Lys-73 is subject to N6-acetyllysine. The residue at position 78 (Lys-78) is an N6-succinyllysine. 90–92 (GRG) contacts GTP. N6-acetyllysine occurs at positions 132 and 139. Leu-146 contributes to the GTP binding site. Ser-161 carries the phosphoserine modification. N6-acetyllysine occurs at positions 200, 218, and 227. The Mg(2+) site is built by Asn-243 and Asp-257. N6-acetyllysine occurs at positions 271 and 291. Residue Asn-308 participates in substrate binding. Lys-338 carries the post-translational modification N6-succinyllysine. The residue at position 347 (Lys-347) is an N6-acetyllysine. Residue 365–367 (GIV) participates in substrate binding. 2 positions are modified to N6-acetyllysine: Lys-386 and Lys-423.

It belongs to the succinate/malate CoA ligase beta subunit family. GTP-specific subunit beta subfamily. Heterodimer of an alpha and a beta subunit. The beta subunit determines specificity for GTP. Mg(2+) is required as a cofactor. Mainly expressed in liver, kidney, heart, spleen and skeletal muscle. Also found in intestine and colon, and in low amounts in lung, brain, prostate, testis and ovary.

The protein localises to the mitochondrion. It catalyses the reaction GTP + succinate + CoA = succinyl-CoA + GDP + phosphate. Its pathway is carbohydrate metabolism; tricarboxylic acid cycle; succinate from succinyl-CoA (ligase route): step 1/1. GTP-specific succinyl-CoA synthetase functions in the citric acid cycle (TCA), coupling the hydrolysis of succinyl-CoA to the synthesis of GTP and thus represents the only step of substrate-level phosphorylation in the TCA. The beta subunit provides nucleotide specificity of the enzyme and binds the substrate succinate, while the binding sites for coenzyme A and phosphate are found in the alpha subunit. The sequence is that of Succinate--CoA ligase [GDP-forming] subunit beta, mitochondrial from Homo sapiens (Human).